We begin with the raw amino-acid sequence, 459 residues long: Ribulose bisphosphate carboxylase (459 aa).

Residue Asn111 coordinates substrate. Residue Lys166 is the Proton acceptor of the active site. Residue Lys168 participates in substrate binding. The Mg(2+) site is built by Lys191, Asp193, and Glu194. Lys191 carries the post-translational modification N6-carboxylysine. The active-site Proton acceptor is His287. Residues Arg288, His321, and Ser368 each contribute to the substrate site.

Belongs to the RuBisCO large chain family. Type II subfamily. In terms of assembly, homodimer. It depends on Mg(2+) as a cofactor.

It catalyses the reaction 2 (2R)-3-phosphoglycerate + 2 H(+) = D-ribulose 1,5-bisphosphate + CO2 + H2O. The enzyme catalyses D-ribulose 1,5-bisphosphate + O2 = 2-phosphoglycolate + (2R)-3-phosphoglycerate + 2 H(+). In terms of biological role, ruBisCO catalyzes two reactions: the carboxylation of D-ribulose 1,5-bisphosphate, the primary event in carbon dioxide fixation, as well as the oxidative fragmentation of the pentose substrate. Both reactions occur simultaneously and in competition at the same active site. This chain is Ribulose bisphosphate carboxylase, found in Paramagnetospirillum magnetotacticum (Aquaspirillum magnetotacticum).